We begin with the raw amino-acid sequence, 459 residues long: Phosphoglucosamine mutase (459 aa).

Serine 102 acts as the Phosphoserine intermediate in catalysis. 4 residues coordinate Mg(2+): serine 102, aspartate 243, aspartate 245, and aspartate 247. The residue at position 102 (serine 102) is a Phosphoserine.

This sequence belongs to the phosphohexose mutase family. Mg(2+) is required as a cofactor. In terms of processing, activated by phosphorylation.

It catalyses the reaction alpha-D-glucosamine 1-phosphate = D-glucosamine 6-phosphate. In terms of biological role, catalyzes the conversion of glucosamine-6-phosphate to glucosamine-1-phosphate. The chain is Phosphoglucosamine mutase from Bartonella henselae (strain ATCC 49882 / DSM 28221 / CCUG 30454 / Houston 1) (Rochalimaea henselae).